The primary structure comprises 51 residues: Ribosome biogenesis protein Nop10 (51 aa).

This sequence belongs to the NOP10 family.

Functionally, involved in ribosome biogenesis; more specifically in 18S rRNA pseudouridylation and in cleavage of pre-rRNA. In Methanococcus maripaludis (strain C6 / ATCC BAA-1332), this protein is Ribosome biogenesis protein Nop10.